The primary structure comprises 316 residues: Pantothenate kinase (316 aa).

Glycine 95 to serine 102 provides a ligand contact to ATP.

The protein belongs to the prokaryotic pantothenate kinase family.

Its subcellular location is the cytoplasm. The catalysed reaction is (R)-pantothenate + ATP = (R)-4'-phosphopantothenate + ADP + H(+). Its pathway is cofactor biosynthesis; coenzyme A biosynthesis; CoA from (R)-pantothenate: step 1/5. The sequence is that of Pantothenate kinase from Sodalis glossinidius (strain morsitans).